A 130-amino-acid chain; its full sequence is Glutamate-rich protein 4 (130 aa).

The segment covering 91–104 has biased composition (acidic residues); sequence EEEEESSKEEEEDQ. Positions 91–130 are disordered; it reads EEEEESSKEEEEDQEPQRKQEEEHLEACPAPHPPDFEMMI. A compositionally biased stretch (basic and acidic residues) spans 105–116; that stretch reads EPQRKQEEEHLE.

This Homo sapiens (Human) protein is Glutamate-rich protein 4 (ERICH4).